The chain runs to 290 residues: Sodium/potassium-transporting ATPase subunit beta-2 (290 aa).

The Cytoplasmic portion of the chain corresponds to 1 to 39 (MVIQKEKKSCGQVVEEWKEFVWNPRTHQFMGRTGTSWAF). Residues 40–67 (ILLFYLVFYGFLTAMFTLTMWVMLQTVS) form a helical; Signal-anchor for type II membrane protein membrane-spanning segment. Residues 68–290 (DHTPKYQDRL…VAFKLRINKT (223 aa)) lie on the Extracellular side of the membrane. N-linked (GlcNAc...) asparagine glycosylation is found at N96 and N118. C129 and C150 form a disulfide bridge. N-linked (GlcNAc...) asparagine glycosylation is found at N153 and N159. C160 and C177 are disulfide-bonded. N193, N197, and N238 each carry an N-linked (GlcNAc...) asparagine glycan. The segment at 193 to 290 (NQSMNVTCAG…VAFKLRINKT (98 aa)) is immunoglobulin-like. Cysteines 200 and 261 form a disulfide.

It belongs to the X(+)/potassium ATPases subunit beta family. In terms of assembly, the sodium/potassium-transporting ATPase is composed of a catalytic alpha subunit, an auxiliary non-catalytic beta subunit and an additional regulatory subunit. Interacts with isoform 2 of BSG.

It localises to the cell membrane. Its function is as follows. This is the non-catalytic component of the active enzyme, which catalyzes the hydrolysis of ATP coupled with the exchange of Na(+) and K(+) ions across the plasma membrane. The exact function of the beta-2 subunit is not known. Functionally, mediates cell adhesion of neurons and astrocytes, and promotes neurite outgrowth. This is Sodium/potassium-transporting ATPase subunit beta-2 (ATP1B2) from Homo sapiens (Human).